The chain runs to 388 residues: S-adenosylmethionine synthase (388 aa).

Residue His-16 participates in ATP binding. Asp-18 contacts Mg(2+). Position 44 (Glu-44) interacts with K(+). 2 residues coordinate L-methionine: Glu-57 and Gln-100. Residues 100–110 are flexible loop; it reads QSPEIAQGVDR. ATP is bound by residues 165–167, Asp-240, 246–247, Ala-263, and Lys-267; these read DAK and RK. L-methionine is bound at residue Asp-240. Lys-271 is an L-methionine binding site.

Belongs to the AdoMet synthase family. In terms of assembly, homotetramer; dimer of dimers. It depends on Mg(2+) as a cofactor. K(+) serves as cofactor.

It localises to the cytoplasm. The catalysed reaction is L-methionine + ATP + H2O = S-adenosyl-L-methionine + phosphate + diphosphate. It functions in the pathway amino-acid biosynthesis; S-adenosyl-L-methionine biosynthesis; S-adenosyl-L-methionine from L-methionine: step 1/1. Functionally, catalyzes the formation of S-adenosylmethionine (AdoMet) from methionine and ATP. The overall synthetic reaction is composed of two sequential steps, AdoMet formation and the subsequent tripolyphosphate hydrolysis which occurs prior to release of AdoMet from the enzyme. The polypeptide is S-adenosylmethionine synthase (Acinetobacter baylyi (strain ATCC 33305 / BD413 / ADP1)).